The primary structure comprises 160 residues: Cytochrome b6-f complex subunit 4 (160 aa).

The next 3 membrane-spanning stretches (helical) occupy residues 36 to 56 (LLYTFPVVILGTLACVVGLAV), 95 to 115 (LLGILLQTAIPLGLMLVPFIE), and 127 to 147 (PIAMAVFLFGTLVTLWMGVAA).

This sequence belongs to the cytochrome b family. PetD subfamily. The 4 large subunits of the cytochrome b6-f complex are cytochrome b6, subunit IV (17 kDa polypeptide, PetD), cytochrome f and the Rieske protein, while the 4 small subunits are PetG, PetL, PetM and PetN. The complex functions as a dimer.

The protein resides in the cellular thylakoid membrane. Component of the cytochrome b6-f complex, which mediates electron transfer between photosystem II (PSII) and photosystem I (PSI), cyclic electron flow around PSI, and state transitions. The protein is Cytochrome b6-f complex subunit 4 of Prochlorothrix hollandica.